The following is a 116-amino-acid chain: Ribosome-binding factor A (116 aa).

Belongs to the RbfA family. Monomer. Binds 30S ribosomal subunits, but not 50S ribosomal subunits or 70S ribosomes.

It localises to the cytoplasm. One of several proteins that assist in the late maturation steps of the functional core of the 30S ribosomal subunit. Associates with free 30S ribosomal subunits (but not with 30S subunits that are part of 70S ribosomes or polysomes). Required for efficient processing of 16S rRNA. May interact with the 5'-terminal helix region of 16S rRNA. This chain is Ribosome-binding factor A, found in Ureaplasma parvum serovar 3 (strain ATCC 27815 / 27 / NCTC 11736).